The primary structure comprises 161 residues: Small heat shock protein hspJ (161 aa).

A sHSP domain is found at 52 to 161; the sequence is SKFTSLNPKL…FEKEIKINIE (110 aa).

This sequence belongs to the small heat shock protein (HSP20) family.

The polypeptide is Small heat shock protein hspJ (hspJ) (Dictyostelium discoideum (Social amoeba)).